Reading from the N-terminus, the 119-residue chain is NADH-quinone oxidoreductase subunit A (119 aa).

A run of 3 helical transmembrane segments spans residues 7 to 27 (YPVL…VSIG), 63 to 83 (LVAI…PWGV), and 88 to 108 (IGWP…LGFA).

The protein belongs to the complex I subunit 3 family. NDH-1 is composed of 14 different subunits. Subunits NuoA, H, J, K, L, M, N constitute the membrane sector of the complex.

The protein resides in the cell inner membrane. The catalysed reaction is a quinone + NADH + 5 H(+)(in) = a quinol + NAD(+) + 4 H(+)(out). Its function is as follows. NDH-1 shuttles electrons from NADH, via FMN and iron-sulfur (Fe-S) centers, to quinones in the respiratory chain. The immediate electron acceptor for the enzyme in this species is believed to be ubiquinone. Couples the redox reaction to proton translocation (for every two electrons transferred, four hydrogen ions are translocated across the cytoplasmic membrane), and thus conserves the redox energy in a proton gradient. The protein is NADH-quinone oxidoreductase subunit A of Burkholderia mallei (strain NCTC 10247).